The chain runs to 254 residues: Alcohol dehydrogenase (254 aa).

10-33 (FVAGLGGIGLDTNREIVKSGPKNL) contacts NAD(+). Ser138 contacts substrate. The active-site Proton acceptor is Tyr151.

This sequence belongs to the short-chain dehydrogenases/reductases (SDR) family. In terms of assembly, homodimer.

The catalysed reaction is a primary alcohol + NAD(+) = an aldehyde + NADH + H(+). The enzyme catalyses a secondary alcohol + NAD(+) = a ketone + NADH + H(+). This is Alcohol dehydrogenase (Adh) from Scaptomyza albovittata (Fruit fly).